The chain runs to 212 residues: Large ribosomal subunit protein uL3 (212 aa).

Position 153 is an N5-methylglutamine (glutamine 153).

Belongs to the universal ribosomal protein uL3 family. As to quaternary structure, part of the 50S ribosomal subunit. Forms a cluster with proteins L14 and L19. Methylated by PrmB.

Its function is as follows. One of the primary rRNA binding proteins, it binds directly near the 3'-end of the 23S rRNA, where it nucleates assembly of the 50S subunit. The sequence is that of Large ribosomal subunit protein uL3 from Idiomarina loihiensis (strain ATCC BAA-735 / DSM 15497 / L2-TR).